A 196-amino-acid polypeptide reads, in one-letter code: Phosphoheptose isomerase (196 aa).

The SIS domain occupies 34 to 196 (MVQCLLGGKK…DRTLFPQDEA (163 aa)). Position 49–51 (49–51 (NGG)) interacts with substrate. 2 residues coordinate Zn(2+): H58 and E62. Substrate contacts are provided by residues E62, 91-92 (ND), 117-119 (STS), S122, and Q172. Q172 and H180 together coordinate Zn(2+).

It belongs to the SIS family. GmhA subfamily. Homotetramer. The cofactor is Zn(2+).

The protein localises to the cytoplasm. It catalyses the reaction 2 D-sedoheptulose 7-phosphate = D-glycero-alpha-D-manno-heptose 7-phosphate + D-glycero-beta-D-manno-heptose 7-phosphate. It participates in carbohydrate biosynthesis; D-glycero-D-manno-heptose 7-phosphate biosynthesis; D-glycero-alpha-D-manno-heptose 7-phosphate and D-glycero-beta-D-manno-heptose 7-phosphate from sedoheptulose 7-phosphate: step 1/1. Catalyzes the isomerization of sedoheptulose 7-phosphate in D-glycero-D-manno-heptose 7-phosphate. In Shewanella denitrificans (strain OS217 / ATCC BAA-1090 / DSM 15013), this protein is Phosphoheptose isomerase.